The following is a 222-amino-acid chain: GTP cyclohydrolase 1 (222 aa).

Zn(2+)-binding residues include C111, H114, and C182.

This sequence belongs to the GTP cyclohydrolase I family. In terms of assembly, toroid-shaped homodecamer, composed of two pentamers of five dimers.

It catalyses the reaction GTP + H2O = 7,8-dihydroneopterin 3'-triphosphate + formate + H(+). The protein operates within cofactor biosynthesis; 7,8-dihydroneopterin triphosphate biosynthesis; 7,8-dihydroneopterin triphosphate from GTP: step 1/1. The sequence is that of GTP cyclohydrolase 1 from Citrobacter koseri (strain ATCC BAA-895 / CDC 4225-83 / SGSC4696).